A 150-amino-acid chain; its full sequence is MGHLDKEGLCTQGSSFSWLLRVLNDGISLGLTPCLWDMYLLEGEQMLMLITSIAFKVQRSLYEETNKETWGPATPRALKGTGRARPICESLHSSLQALTASESSRGPSLLQTPPRVPGQQALSRGDKGISVSLSLPSLPSRRGRCGRIIG.

The 43-residue stretch at 1-43 folds into the Rab-GAP TBC; truncated domain; sequence MGHLDKEGLCTQGSSFSWLLRVLNDGISLGLTPCLWDMYLLEG. Residues 102–111 are compositionally biased toward polar residues; sequence ESSRGPSLLQ. Residues 102–125 form a disordered region; it reads ESSRGPSLLQTPPRVPGQQALSRG.

This is Putative TBC1 domain family member 29 from Homo sapiens (Human).